The sequence spans 517 residues: ATP synthase subunit alpha 2 (517 aa).

Residue 173–180 coordinates ATP; the sequence is GDRQTGKT.

This sequence belongs to the ATPase alpha/beta chains family. F-type ATPases have 2 components, CF(1) - the catalytic core - and CF(0) - the membrane proton channel. CF(1) has five subunits: alpha(3), beta(3), gamma(1), delta(1), epsilon(1). CF(0) has three main subunits: a(1), b(2) and c(9-12). The alpha and beta chains form an alternating ring which encloses part of the gamma chain. CF(1) is attached to CF(0) by a central stalk formed by the gamma and epsilon chains, while a peripheral stalk is formed by the delta and b chains.

The protein resides in the cell inner membrane. It catalyses the reaction ATP + H2O + 4 H(+)(in) = ADP + phosphate + 5 H(+)(out). Its function is as follows. Produces ATP from ADP in the presence of a proton gradient across the membrane. The alpha chain is a regulatory subunit. The protein is ATP synthase subunit alpha 2 of Legionella pneumophila subsp. pneumophila (strain Philadelphia 1 / ATCC 33152 / DSM 7513).